The primary structure comprises 244 residues: Exosome complex component Rrp41 (244 aa).

This sequence belongs to the RNase PH family. Rrp41 subfamily. Component of the archaeal exosome complex. Forms a hexameric ring-like arrangement composed of 3 Rrp41-Rrp42 heterodimers. The hexameric ring associates with a trimer of Rrp4 and/or Csl4 subunits.

It localises to the cytoplasm. Catalytic component of the exosome, which is a complex involved in RNA degradation. Has 3'-&gt;5' exoribonuclease activity. Can also synthesize heteromeric RNA-tails. This chain is Exosome complex component Rrp41, found in Nitrosopumilus maritimus (strain SCM1).